Here is a 273-residue protein sequence, read N- to C-terminus: Dermonecrotic toxin LdSicTox-alphaIB3aii (273 aa).

Residue H5 is part of the active site. Mg(2+)-binding residues include E25 and D27. The Nucleophile role is filled by H41. 2 disulfide bridges follow: C45/C51 and C47/C190. D85 contacts Mg(2+).

It belongs to the arthropod phospholipase D family. Class II subfamily. Requires Mg(2+) as cofactor. In terms of tissue distribution, expressed by the venom gland.

Its subcellular location is the secreted. The enzyme catalyses an N-(acyl)-sphingosylphosphocholine = an N-(acyl)-sphingosyl-1,3-cyclic phosphate + choline. It catalyses the reaction an N-(acyl)-sphingosylphosphoethanolamine = an N-(acyl)-sphingosyl-1,3-cyclic phosphate + ethanolamine. The catalysed reaction is a 1-acyl-sn-glycero-3-phosphocholine = a 1-acyl-sn-glycero-2,3-cyclic phosphate + choline. It carries out the reaction a 1-acyl-sn-glycero-3-phosphoethanolamine = a 1-acyl-sn-glycero-2,3-cyclic phosphate + ethanolamine. Its function is as follows. Dermonecrotic toxins cleave the phosphodiester linkage between the phosphate and headgroup of certain phospholipids (sphingolipid and lysolipid substrates), forming an alcohol (often choline) and a cyclic phosphate. This toxin acts on sphingomyelin (SM). It may also act on ceramide phosphoethanolamine (CPE), lysophosphatidylcholine (LPC) and lysophosphatidylethanolamine (LPE), but not on lysophosphatidylserine (LPS), and lysophosphatidylglycerol (LPG). It acts by transphosphatidylation, releasing exclusively cyclic phosphate products as second products. Induces dermonecrosis, hemolysis, increased vascular permeability, edema, inflammatory response, and platelet aggregation. The sequence is that of Dermonecrotic toxin LdSicTox-alphaIB3aii from Loxosceles deserta (Desert recluse spider).